The sequence spans 207 residues: Guanylate kinase (207 aa).

The Guanylate kinase-like domain maps to 5-184; the sequence is GNLFIVSAPS…ALADLSAIIR (180 aa). ATP is bound at residue 12–19; that stretch reads APSGAGKS. Positions 30–49 are disordered; the sequence is PSDKQVSVSHTTRKPRPGEV.

This sequence belongs to the guanylate kinase family.

Its subcellular location is the cytoplasm. The enzyme catalyses GMP + ATP = GDP + ADP. Its function is as follows. Essential for recycling GMP and indirectly, cGMP. This chain is Guanylate kinase, found in Shewanella frigidimarina (strain NCIMB 400).